Here is a 380-residue protein sequence, read N- to C-terminus: Succinyl-diaminopimelate desuccinylase (380 aa).

H69 provides a ligand contact to Zn(2+). D71 is a catalytic residue. A Zn(2+)-binding site is contributed by D102. Residue E135 is the Proton acceptor of the active site. Zn(2+) contacts are provided by E136, E164, and H353.

It belongs to the peptidase M20A family. DapE subfamily. As to quaternary structure, homodimer. Requires Zn(2+) as cofactor. It depends on Co(2+) as a cofactor.

The enzyme catalyses N-succinyl-(2S,6S)-2,6-diaminopimelate + H2O = (2S,6S)-2,6-diaminopimelate + succinate. Its pathway is amino-acid biosynthesis; L-lysine biosynthesis via DAP pathway; LL-2,6-diaminopimelate from (S)-tetrahydrodipicolinate (succinylase route): step 3/3. In terms of biological role, catalyzes the hydrolysis of N-succinyl-L,L-diaminopimelic acid (SDAP), forming succinate and LL-2,6-diaminopimelate (DAP), an intermediate involved in the bacterial biosynthesis of lysine and meso-diaminopimelic acid, an essential component of bacterial cell walls. This chain is Succinyl-diaminopimelate desuccinylase, found in Ruegeria pomeroyi (strain ATCC 700808 / DSM 15171 / DSS-3) (Silicibacter pomeroyi).